The chain runs to 625 residues: Probable potassium transport system protein Kup 1 (625 aa).

12 helical membrane-spanning segments follow: residues 14–34, 50–70, 104–124, 139–159, 170–190, 213–233, 249–269, 287–307, 339–359, 368–388, 396–416, and 421–441; these read LSLL…TSPL, AAAV…ITTV, IVAL…ITPA, PALQ…LFAI, LFGP…LVGI, GATG…AEAL, WFAV…ALVI, LLLP…QSVI, IYVG…TIGF, AYGI…FIAM, LLAA…FFLA, and IAEG…LMWI.

It belongs to the HAK/KUP transporter (TC 2.A.72) family.

It is found in the cell inner membrane. The enzyme catalyses K(+)(in) + H(+)(in) = K(+)(out) + H(+)(out). Functionally, transport of potassium into the cell. Likely operates as a K(+):H(+) symporter. This is Probable potassium transport system protein Kup 1 from Bradyrhizobium sp. (strain ORS 278).